The following is a 486-amino-acid chain: BTB/POZ domain and ankyrin repeat-containing protein NBCL (486 aa).

One can recognise a BTB domain in the interval 25–115 (SDVTFSVEGR…LYSGQVSIVP (91 aa)). The C2HC NPR-type zinc-finger motif lies at 121–135 (RPNCGERGCWHTHCS). Residues Cys124, Cys129, His131, and Cys134 each contribute to the Zn(2+) site. ANK repeat units follow at residues 257–286 (QKIRRMRRALDSSDVELVKLMVMGEGLNLD), 287–316 (EALALHYAVENCSREVVKALLELGAADVNY), 321–350 (AGKTPLHIAAEMVSPDMVAVLLDHHADPNV), and 354–388 (DNVTPLDILRTLTSDFLFKGAIPGLTHIEPNKLRL). 2 disordered regions span residues 403–441 (EEGNANNNPPSSTTTTLPMYHHPMNDDHNSSSSSGNNHN) and 464–486 (QMSDDHGGRHGDPAMYHHSHHDY). Composition is skewed to low complexity over residues 406 to 418 (NANNNPPSSTTTT) and 432 to 441 (SSSSSGNNHN). Basic and acidic residues predominate over residues 466-475 (SDDHGGRHGD).

This sequence belongs to the plant 'ANKYRIN-BTB/POZ' family. 'NOOT-BOP-COCH-like' (NBCL) subfamily. In terms of assembly, homodimer.

It localises to the nucleus. Its subcellular location is the cytoplasm. The protein resides in the cell membrane. It functions in the pathway protein modification; protein ubiquitination. May act as a substrate-specific adapter of an E3 ubiquitin-protein ligase complex (CUL3-RBX1-BTB) which mediates the ubiquitination and subsequent proteasomal degradation of target proteins. Transcriptional co-regulator involved in the promotion of leaf and floral meristem fate and determinacy. Necessary for the development of stipules at the base of petioles. Required for the abscission of senescent organs, probably by regulating the cell wall disorganization in abscission zones (AZs, e.g. pulvini at the base of leaves). Promotes slightly root-cap border cells separation from the root tip. Involved in the coordination of the symbiotic nodule developmental program; promotes the formation of root nodules by interacting directly with APP1 to modulate the expression of the nuclear transcription factor Y subunit (NF-YA1), a key nodulin. Necessary for the robust maintenance of nodule identity throughout the nodule developmental program. This chain is BTB/POZ domain and ankyrin repeat-containing protein NBCL, found in Lupinus angustifolius (Narrow-leaved blue lupine).